The chain runs to 665 residues: Coiled-coil domain-containing protein 138 (665 aa).

Threonine 48 bears the Phosphothreonine mark. Serine 49 is modified (phosphoserine). Residues 198 to 323 (QQKFAEELQK…YEFMTIQRLK (126 aa)) are a coiled coil. Phosphoserine is present on serine 469.

This Macaca fascicularis (Crab-eating macaque) protein is Coiled-coil domain-containing protein 138 (CCDC138).